Consider the following 143-residue polypeptide: Large ribosomal subunit protein uL11 (143 aa).

The protein belongs to the universal ribosomal protein uL11 family. In terms of assembly, part of the ribosomal stalk of the 50S ribosomal subunit. Interacts with L10 and the large rRNA to form the base of the stalk. L10 forms an elongated spine to which L12 dimers bind in a sequential fashion forming a multimeric L10(L12)X complex. Post-translationally, one or more lysine residues are methylated.

Forms part of the ribosomal stalk which helps the ribosome interact with GTP-bound translation factors. This is Large ribosomal subunit protein uL11 from Burkholderia multivorans (strain ATCC 17616 / 249).